A 223-amino-acid chain; its full sequence is MTTQDELKRIAAEKAVEFVPENEYIGIGTGSTINFFIEALGKSGKKIKGAVSTSKKSGELLAQYDIPVVSLNEVSGLAVYIDGADEVNHALQMIKGGGGAHLNEKIVASASEKFICIADESKYVSRLGKFPLPVEVVESARSLVSRKLLAMGGQPELRIGYTTFYGNQIVDVHGLNIDQPLTMEDEINKITGVLENGIFARDAADVLILGTEEGAKVIYPCQG.

Residues 29–32 (TGST), 82–85 (DGAD), and 95–98 (KGGG) contribute to the substrate site. The Proton acceptor role is filled by Glu104. Lys122 contacts substrate.

Belongs to the ribose 5-phosphate isomerase family. As to quaternary structure, homodimer.

It catalyses the reaction aldehydo-D-ribose 5-phosphate = D-ribulose 5-phosphate. Its pathway is carbohydrate degradation; pentose phosphate pathway; D-ribose 5-phosphate from D-ribulose 5-phosphate (non-oxidative stage): step 1/1. Its function is as follows. Catalyzes the reversible conversion of ribose-5-phosphate to ribulose 5-phosphate. This Neisseria meningitidis serogroup B (strain ATCC BAA-335 / MC58) protein is Ribose-5-phosphate isomerase A.